The following is a 286-amino-acid chain: Thymidylate synthase (286 aa).

Arg27 is a dUMP binding site. His57 contacts (6R)-5,10-methylene-5,6,7,8-tetrahydrofolate. A dUMP-binding site is contributed by Arg148–Arg149. The active-site Nucleophile is the Cys168. Residues Arg188–Asp191, Asn199, and His229–Tyr231 each bind dUMP. Asp191 provides a ligand contact to (6R)-5,10-methylene-5,6,7,8-tetrahydrofolate. Ala285 serves as a coordination point for (6R)-5,10-methylene-5,6,7,8-tetrahydrofolate.

The protein belongs to the thymidylate synthase family. Bacterial-type ThyA subfamily. As to quaternary structure, homodimer.

The protein localises to the cytoplasm. The enzyme catalyses dUMP + (6R)-5,10-methylene-5,6,7,8-tetrahydrofolate = 7,8-dihydrofolate + dTMP. Its pathway is pyrimidine metabolism; dTTP biosynthesis. Its function is as follows. Catalyzes the reductive methylation of 2'-deoxyuridine-5'-monophosphate (dUMP) to 2'-deoxythymidine-5'-monophosphate (dTMP) while utilizing 5,10-methylenetetrahydrofolate (mTHF) as the methyl donor and reductant in the reaction, yielding dihydrofolate (DHF) as a by-product. This enzymatic reaction provides an intracellular de novo source of dTMP, an essential precursor for DNA biosynthesis. The sequence is that of Thymidylate synthase from Psychrobacter sp. (strain PRwf-1).